A 380-amino-acid chain; its full sequence is Protein RecA (380 aa).

65-72 lines the ATP pocket; sequence GPESSGKT. Residues 329–380 are disordered; that stretch reads DATGEETSETDDQAKEAKDKGTAKNGSKGQSKSTKATPAETALDLGDQPTEK. Basic and acidic residues predominate over residues 340-350; that stretch reads DQAKEAKDKGT. Over residues 352–364 the composition is skewed to polar residues; the sequence is KNGSKGQSKSTKA.

Belongs to the RecA family.

The protein localises to the cytoplasm. Functionally, can catalyze the hydrolysis of ATP in the presence of single-stranded DNA, the ATP-dependent uptake of single-stranded DNA by duplex DNA, and the ATP-dependent hybridization of homologous single-stranded DNAs. It interacts with LexA causing its activation and leading to its autocatalytic cleavage. This is Protein RecA from Lactiplantibacillus plantarum (strain ATCC BAA-793 / NCIMB 8826 / WCFS1) (Lactobacillus plantarum).